The following is a 42-amino-acid chain: Beta-defensin 6 (42 aa).

Q1 carries the post-translational modification Pyrrolidone carboxylic acid. Cystine bridges form between C9/C38, C16/C31, and C21/C39.

The protein belongs to the beta-defensin family. In terms of tissue distribution, neutrophilic granules.

It is found in the secreted. Functionally, has bactericidal activity. Active against E.coli ML35 and S.aureus 502A. The protein is Beta-defensin 6 (DEFB6) of Bos taurus (Bovine).